The sequence spans 78 residues: Small ribosomal subunit protein bS20 (78 aa).

It belongs to the bacterial ribosomal protein bS20 family.

Its function is as follows. Binds directly to 16S ribosomal RNA. The protein is Small ribosomal subunit protein bS20 of Streptococcus pneumoniae serotype 19F (strain G54).